Reading from the N-terminus, the 262-residue chain is Small ribosomal subunit protein eS4C (262 aa).

Residues 42 to 105 form the S4 RNA-binding domain; sequence LPLIVFLRNR…GEHFRLVYDI (64 aa). Residue Thr-194 is modified to Phosphothreonine.

Belongs to the eukaryotic ribosomal protein eS4 family. Component of the small ribosomal subunit (SSU). Mature yeast ribosomes consist of a small (40S) and a large (60S) subunit. The 40S small subunit contains 1 molecule of ribosomal RNA (18S rRNA) and at least 33 different proteins. The large 60S subunit contains 3 rRNA molecules (25S, 5.8S and 5S rRNA) and at least 46 different proteins.

It is found in the cytoplasm. Component of the ribosome, a large ribonucleoprotein complex responsible for the synthesis of proteins in the cell. The small ribosomal subunit (SSU) binds messenger RNAs (mRNAs) and translates the encoded message by selecting cognate aminoacyl-transfer RNA (tRNA) molecules. The large subunit (LSU) contains the ribosomal catalytic site termed the peptidyl transferase center (PTC), which catalyzes the formation of peptide bonds, thereby polymerizing the amino acids delivered by tRNAs into a polypeptide chain. The nascent polypeptides leave the ribosome through a tunnel in the LSU and interact with protein factors that function in enzymatic processing, targeting, and the membrane insertion of nascent chains at the exit of the ribosomal tunnel. The chain is Small ribosomal subunit protein eS4C (rps403) from Schizosaccharomyces pombe (strain 972 / ATCC 24843) (Fission yeast).